The chain runs to 235 residues: Class B acid phosphatase (235 aa).

The signal sequence occupies residues 1 to 22 (MKNLLKLSAIAILAASAVSTFA). Aspartate 67 serves as the catalytic Nucleophile. Mg(2+) is bound by residues aspartate 67 and aspartate 69. Aspartate 69 (proton donor) is an active-site residue. Substrate-binding positions include 135 to 136 (TG) and lysine 175. Mg(2+) is bound at residue aspartate 190.

Belongs to the class B bacterial acid phosphatase family. As to quaternary structure, homotetramer. It depends on Mg(2+) as a cofactor.

It is found in the periplasm. It carries out the reaction a phosphate monoester + H2O = an alcohol + phosphate. Dephosphorylates several organic phosphate monoesters. Also has a phosphotransferase activity catalyzing the transfer of low-energy phosphate groups from organic phosphate monoesters to free hydroxyl groups of various organic compounds. This Haemophilus parainfluenzae (strain T3T1) protein is Class B acid phosphatase.